The following is a 436-amino-acid chain: MAVTVETLEKLERKITLSLPLTTIQTEVDARLKRLARTVKMDGFRPGKVPMSVVAQRYGYSVQYEVLNDKVGEAFAQAANEANLRVAGQPRITEKDGAPEGEVTFDAVFEVFPEVKIGDLSTAEVEKLSAEVTDSAIDKTVDILRKQRRTFAQRALAAAAEDGDRVTVDFEGKIDGEPFQGGKAEDFQFLVGEGQMLKEFEDAVRGMKSGESKTFPLAFPEDYHGKDVAGKTADFMVTVKKIEAAHLPEVNEQLAKSLGIADGTVEGLRADIKKNLEREVKFRLLARNKQAVMDALVSKAELDLPNASVQAEIARLLEAARADLKQRGIKDADKAEIPEDVFRPQAERRVRLGLVVAELVRANNLQAKPEQLKAHVDELAASYEKPEDVVRWYFSDRNRLAEVEAVVIENNVTDFVLGQAKVNDKAVSFDELMGQA.

The PPIase FKBP-type domain maps to 163–248 (GDRVTVDFEG…VKKIEAAHLP (86 aa)).

This sequence belongs to the FKBP-type PPIase family. Tig subfamily.

The protein resides in the cytoplasm. The enzyme catalyses [protein]-peptidylproline (omega=180) = [protein]-peptidylproline (omega=0). Its function is as follows. Involved in protein export. Acts as a chaperone by maintaining the newly synthesized protein in an open conformation. Functions as a peptidyl-prolyl cis-trans isomerase. The chain is Trigger factor from Acidovorax ebreus (strain TPSY) (Diaphorobacter sp. (strain TPSY)).